Here is a 251-residue protein sequence, read N- to C-terminus: Fibroblast growth factor-binding protein 1 (251 aa).

A signal peptide spans Met-1–Ser-20. Residues Lys-25–Thr-62 are disordered. 3 disulfides stabilise this stretch: Cys-74-Cys-91, Cys-100-Cys-133, and Cys-109-Cys-145. The segment at Asn-160–Glu-189 is disordered. Positions Glu-170 to Val-182 are enriched in basic and acidic residues. The O-linked (GalNAc...) serine glycan is linked to Ser-175. A sufficient for interaction with FGF2 and FGF2-induced effects region spans residues Arg-210 to Cys-251. 2 disulfides stabilise this stretch: Cys-214-Cys-251 and Cys-231-Cys-239.

The protein belongs to the fibroblast growth factor-binding protein family. As to quaternary structure, found in a complex with FGFBP1, FGF1 and FGF2. Interacts with FGF1, FGF7, FGF10, FGF22 and HSPG2. Interacts with FGF2. In terms of tissue distribution, expressed in intestine, ovary, lung, placenta and normal and wounded skin.

The protein localises to the secreted. It is found in the extracellular space. It localises to the cell membrane. In terms of biological role, acts as a carrier protein that releases fibroblast-binding factors (FGFs) from the extracellular matrix (EM) storage and thus enhances the mitogenic activity of FGFs. Enhances FGF2 signaling during tissue repair, angiogenesis and in tumor growth. The chain is Fibroblast growth factor-binding protein 1 (Fgfbp1) from Mus musculus (Mouse).